A 90-amino-acid chain; its full sequence is Acylphosphatase (90 aa).

The region spanning 4–90 (RWRFLIEGSV…TGNDWFDVRT (87 aa)) is the Acylphosphatase-like domain. Catalysis depends on residues R19 and N37.

Belongs to the acylphosphatase family.

The enzyme catalyses an acyl phosphate + H2O = a carboxylate + phosphate + H(+). The sequence is that of Acylphosphatase (acyP) from Synechococcus sp. (strain CC9311).